Consider the following 100-residue polypeptide: Vesicle-associated membrane protein 8 (100 aa).

The Cytoplasmic segment spans residues 1–74 (MEASGSAGND…ARKFWWKNVK (74 aa)). 2 positions are modified to phosphoserine: S4 and S17. In terms of domain architecture, v-SNARE coiled-coil homology spans 11–71 (RVRNLQSEVE…QKVARKFWWK (61 aa)). 3 positions are modified to phosphothreonine: T27, T47, and T53. S54 carries the post-translational modification Phosphoserine. A helical; Anchor for type IV membrane protein transmembrane segment spans residues 75–95 (MIVIICVIVLIILILIILFAT). Residues 96–100 (GTIPT) lie on the Vesicular side of the membrane.

Belongs to the synaptobrevin family. In terms of assembly, forms a SNARE complex composed of VAMP8, SNAP29 and STX17 involved in fusion of autophagosome with lysosome. Found in a number of SNARE complexes with NAPA, SNAP23, SNAP25, STX1A, STX4, STX7, STX8 and VTI1B. Interacts with PICALM. SNARE complex formation and binding by PICALM are mutually exclusive processes for VAMP8. Interacts with SBF2/MTMR13. Interacts with RAB21 (in GTP-bound form) in response to starvation; the interaction probably regulates VAMP8 endolysosomal trafficking. Interacts with STX17; this interaction is increased in the absence of TMEM39A. Interacts with TRIM6. Expressed (at protein level) at a high level in kidney, lung and spleen; at a lower level in testis, liver, brain and heart. Expressed in kidney and retinal pigment epithelium derived cell line.

The protein localises to the lysosome membrane. Its subcellular location is the late endosome membrane. It localises to the early endosome membrane. It is found in the midbody. The protein resides in the cell membrane. The protein localises to the zymogen granule membrane. Its function is as follows. SNAREs, soluble N-ethylmaleimide-sensitive factor-attachment protein receptors, are essential proteins for fusion of cellular membranes. SNAREs localized on opposing membranes assemble to form a trans-SNARE complex, an extended, parallel four alpha-helical bundle that drives membrane fusion. VAMP8 is a SNARE involved in autophagy through the direct control of autophagosome membrane fusion with the lysososome membrane via its interaction with the STX17-SNAP29 binary t-SNARE complex. Also required for dense-granule secretion in platelets. Also plays a role in regulated enzyme secretion in pancreatic acinar cells. Involved in the abscission of the midbody during cell division, which leads to completely separate daughter cells. Involved in the homotypic fusion of early and late endosomes. Also participates in the activation of type I interferon antiviral response through a TRIM6-dependent mechanism. This chain is Vesicle-associated membrane protein 8, found in Rattus norvegicus (Rat).